We begin with the raw amino-acid sequence, 636 residues long: Threonine--tRNA ligase (636 aa).

In terms of domain architecture, TGS spans 1 to 63 (MINITTSFPN…SKDGSVDPVT (63 aa)). Positions 244–535 (DHRKIAKDLG…LIEHYAGNIP (292 aa)) are catalytic. Residues Cys-335, His-386, and His-512 each coordinate Zn(2+).

The protein belongs to the class-II aminoacyl-tRNA synthetase family. As to quaternary structure, homodimer. Zn(2+) serves as cofactor.

The protein localises to the cytoplasm. It carries out the reaction tRNA(Thr) + L-threonine + ATP = L-threonyl-tRNA(Thr) + AMP + diphosphate + H(+). Catalyzes the attachment of threonine to tRNA(Thr) in a two-step reaction: L-threonine is first activated by ATP to form Thr-AMP and then transferred to the acceptor end of tRNA(Thr). Also edits incorrectly charged L-seryl-tRNA(Thr). The chain is Threonine--tRNA ligase from Anaplasma marginale (strain St. Maries).